Consider the following 874-residue polypeptide: Chaperone protein ClpB 1 (874 aa).

Residues 6–148 (PNQFTEKAWE…RQIIQQIRGS (143 aa)) form the Clp R domain. Repeat stretches follow at residues 9–73 (FTEK…IARQ) and 85–148 (LGRS…IRGS). An NBD1 region spans residues 161–342 (EALEKYGRDL…RRFQQVFVDQ (182 aa)). 208–215 (GEPGVGKT) serves as a coordination point for ATP. A linker region spans residues 343-551 (PTVEDTISIL…IAEIISKWTG (209 aa)). A coiled-coil region spans residues 393–527 (IDLVDESAAR…MEGGLATTHT (135 aa)). Positions 561-772 (EMQKLLNLDE…RVDETIIFHS (212 aa)) are NBD2. Residue 611–618 (GPTGVGKT) participates in ATP binding. Residues 773–874 (LRKDQLQQIV…IATPTAVPLS (102 aa)) form a C-terminal region.

Belongs to the ClpA/ClpB family. Homohexamer. The oligomerization is ATP-dependent.

Its subcellular location is the cytoplasm. Part of a stress-induced multi-chaperone system, it is involved in the recovery of the cell from heat-induced damage, in cooperation with DnaK, DnaJ and GrpE. Acts before DnaK, in the processing of protein aggregates. Protein binding stimulates the ATPase activity; ATP hydrolysis unfolds the denatured protein aggregates, which probably helps expose new hydrophobic binding sites on the surface of ClpB-bound aggregates, contributing to the solubilization and refolding of denatured protein aggregates by DnaK. Necessary for thermotolerance. The polypeptide is Chaperone protein ClpB 1 (clpB1) (Synechococcus elongatus (strain ATCC 33912 / PCC 7942 / FACHB-805) (Anacystis nidulans R2)).